The following is a 159-amino-acid chain: RNA pyrophosphohydrolase (159 aa).

The 144-residue stretch at 6-149 folds into the Nudix hydrolase domain; that stretch reads GFRPNVGIIL…KREVYRRALK (144 aa). The short motif at 38–59 is the Nudix box element; the sequence is GGINPDETPEDALYRELNEEVG.

This sequence belongs to the Nudix hydrolase family. RppH subfamily. The cofactor is a divalent metal cation.

Its function is as follows. Accelerates the degradation of transcripts by removing pyrophosphate from the 5'-end of triphosphorylated RNA, leading to a more labile monophosphorylated state that can stimulate subsequent ribonuclease cleavage. The sequence is that of RNA pyrophosphohydrolase from Pseudomonas entomophila (strain L48).